A 520-amino-acid polypeptide reads, in one-letter code: GMP synthase [glutamine-hydrolyzing] (520 aa).

One can recognise a Glutamine amidotransferase type-1 domain in the interval 9–202 (KILILDFGSQ…VRKICGCSGK (194 aa)). The active-site Nucleophile is the C86. Active-site residues include H176 and E178. The GMPS ATP-PPase domain occupies 203-395 (WTPGQIIEDA…LGLPHQMVWR (193 aa)). 230–236 (SGGVDSS) provides a ligand contact to ATP.

In terms of assembly, homodimer.

The enzyme catalyses XMP + L-glutamine + ATP + H2O = GMP + L-glutamate + AMP + diphosphate + 2 H(+). It participates in purine metabolism; GMP biosynthesis; GMP from XMP (L-Gln route): step 1/1. Functionally, catalyzes the synthesis of GMP from XMP. This Geotalea daltonii (strain DSM 22248 / JCM 15807 / FRC-32) (Geobacter daltonii) protein is GMP synthase [glutamine-hydrolyzing].